A 2184-amino-acid polypeptide reads, in one-letter code: Chromodomain-helicase-DNA-binding protein 8 (2184 aa).

Disordered stretches follow at residues 379-399 (VKTSTGGGESRKLDSQKKQEK) and 419-527 (IPRV…KRKK). Positions 387–399 (ESRKLDSQKKQEK) are enriched in basic and acidic residues. The segment covering 425-437 (EDELPSVNPEDDD) has biased composition (acidic residues). Basic and acidic residues predominate over residues 448-459 (GETSDRSKDEKP). Residues 516–527 (KRRSNRQVKRKK) are compositionally biased toward basic residues. 2 consecutive Chromo domains span residues 586–653 (AIVD…TQMQ) and 668–734 (VEVD…RVAR). A Helicase ATP-binding domain is found at 767 to 941 (LFNWYNRQNC…FSLLHFLEPT (175 aa)). Position 780-787 (780-787 (DEMGLGKT)) interacts with ATP. Positions 892 to 895 (DEAH) match the DEAH box motif. The Helicase C-terminal domain occupies 1081–1252 (LIDKLLPKLR…FTKKEIEDLL (172 aa)). Disordered stretches follow at residues 1907-1989 (GISG…EESR) and 2039-2076 (WSSPRRLSDPPSDSPDSLPPTPEQQSPAHFTQIRPAPD). 2 stretches are compositionally biased toward low complexity: residues 1912-1961 (SRPS…SNSE) and 2040-2054 (SSPRRLSDPPSDSPD).

The protein belongs to the SNF2/RAD54 helicase family. CHD8 subfamily. Component of some MLL1/MLL complex.

It localises to the nucleus. It catalyses the reaction ATP + H2O = ADP + phosphate + H(+). In terms of biological role, ATP-dependent chromatin-remodeling factor, it slides nucleosomes along DNA; nucleosome sliding requires ATP. Acts as a transcription repressor by remodeling chromatin structure and recruiting histone H1 to target genes. Suppresses p53/tp53-mediated apoptosis by recruiting histone H1 and preventing p53/tp53 transactivation activity. Acts as a negative regulator of Wnt signaling pathway by regulating beta-catenin (ctnnb1) activity. Negatively regulates ctnnb1-targeted gene expression by being recruited specifically to the promoter regions of several ctnnb1 responsive genes. May also act as a transcription activator by participating in efficient U6 RNA polymerase III transcription. The sequence is that of Chromodomain-helicase-DNA-binding protein 8 from Xenopus tropicalis (Western clawed frog).